The following is a 252-amino-acid chain: 5'-nucleotidase SurE (252 aa).

The a divalent metal cation site is built by D8, D9, S39, and N91.

Belongs to the SurE nucleotidase family. A divalent metal cation serves as cofactor.

Its subcellular location is the cytoplasm. It carries out the reaction a ribonucleoside 5'-phosphate + H2O = a ribonucleoside + phosphate. In terms of biological role, nucleotidase that shows phosphatase activity on nucleoside 5'-monophosphates. The polypeptide is 5'-nucleotidase SurE (Bordetella avium (strain 197N)).